We begin with the raw amino-acid sequence, 218 residues long: Phosphatidylserine decarboxylase proenzyme (218 aa).

The active-site Schiff-base intermediate with substrate; via pyruvic acid is Ser-183. Ser-183 bears the Pyruvic acid (Ser); by autocatalysis mark.

Belongs to the phosphatidylserine decarboxylase family. PSD-A subfamily. Heterodimer of a large membrane-associated beta subunit and a small pyruvoyl-containing alpha subunit. Pyruvate is required as a cofactor. Is synthesized initially as an inactive proenzyme. Formation of the active enzyme involves a self-maturation process in which the active site pyruvoyl group is generated from an internal serine residue via an autocatalytic post-translational modification. Two non-identical subunits are generated from the proenzyme in this reaction, and the pyruvate is formed at the N-terminus of the alpha chain, which is derived from the carboxyl end of the proenzyme. The post-translation cleavage follows an unusual pathway, termed non-hydrolytic serinolysis, in which the side chain hydroxyl group of the serine supplies its oxygen atom to form the C-terminus of the beta chain, while the remainder of the serine residue undergoes an oxidative deamination to produce ammonia and the pyruvoyl prosthetic group on the alpha chain.

Its subcellular location is the cell membrane. The catalysed reaction is a 1,2-diacyl-sn-glycero-3-phospho-L-serine + H(+) = a 1,2-diacyl-sn-glycero-3-phosphoethanolamine + CO2. The protein operates within phospholipid metabolism; phosphatidylethanolamine biosynthesis; phosphatidylethanolamine from CDP-diacylglycerol: step 2/2. Its function is as follows. Catalyzes the formation of phosphatidylethanolamine (PtdEtn) from phosphatidylserine (PtdSer). This chain is Phosphatidylserine decarboxylase proenzyme, found in Magnetococcus marinus (strain ATCC BAA-1437 / JCM 17883 / MC-1).